The chain runs to 253 residues: Polyprenal reductase (253 aa).

Transmembrane regions (helical) follow at residues 18 to 38, 78 to 98, 123 to 143, and 200 to 220; these read LSFF…PEFL, FLSL…IIFG, HYLV…ISLY, and IIYS…VWVI.

Belongs to the steroid 5-alpha reductase family. Polyprenal reductase subfamily.

Its subcellular location is the endoplasmic reticulum membrane. The enzyme catalyses a di-trans,poly-cis-dolichal + NADP(+) = a di-trans,poly-cis-polyprenal + NADPH + H(+). The protein operates within protein modification; protein glycosylation. In terms of biological role, plays a key role in early steps of protein N-linked glycosylation by being involved in the conversion of polyprenol into dolichol. Acts as a polyprenal reductase that mediates the reduction of polyprenal into dolichal in a NADP-dependent mechanism. Dolichols are required for the synthesis of dolichol-linked monosaccharides and the oligosaccharide precursor used for N-glycosylation. This is Polyprenal reductase from Saccharomyces cerevisiae (strain ATCC 204508 / S288c) (Baker's yeast).